A 55-amino-acid polypeptide reads, in one-letter code: Large ribosomal subunit protein bL33B (55 aa).

This sequence belongs to the bacterial ribosomal protein bL33 family.

This is Large ribosomal subunit protein bL33B from Salinispora tropica (strain ATCC BAA-916 / DSM 44818 / JCM 13857 / NBRC 105044 / CNB-440).